We begin with the raw amino-acid sequence, 244 residues long: Phosphonates import ATP-binding protein PhnC 2 (244 aa).

The ABC transporter domain occupies 6 to 244; it reads IECHNLETAY…LQAQFVVNNQ (239 aa). 41–48 contributes to the ATP binding site; that stretch reads GLNGAGKS.

The protein belongs to the ABC transporter superfamily. Phosphonates importer (TC 3.A.1.9.1) family. The complex is composed of two ATP-binding proteins (PhnC), two transmembrane proteins (PhnE) and a solute-binding protein (PhnD).

It is found in the cell inner membrane. The enzyme catalyses phosphonate(out) + ATP + H2O = phosphonate(in) + ADP + phosphate + H(+). Its function is as follows. Part of the ABC transporter complex PhnCDE involved in phosphonates import. Responsible for energy coupling to the transport system. In Nostoc sp. (strain PCC 7120 / SAG 25.82 / UTEX 2576), this protein is Phosphonates import ATP-binding protein PhnC 2.